A 513-amino-acid polypeptide reads, in one-letter code: ATP synthase subunit alpha, mitochondrial (513 aa).

Residue 170–177 (GDRQTGKT) participates in ATP binding.

Belongs to the ATPase alpha/beta chains family. As to quaternary structure, F-type ATPases have 2 components, CF(1) - the catalytic core - and CF(0) - the membrane proton channel. CF(1) has five subunits: alpha(3), beta(3), gamma(1), delta(1), epsilon(1). CF(0) has three main subunits: a, b and c.

The protein resides in the mitochondrion. It localises to the mitochondrion inner membrane. In terms of biological role, mitochondrial membrane ATP synthase (F(1)F(0) ATP synthase or Complex V) produces ATP from ADP in the presence of a proton gradient across the membrane which is generated by electron transport complexes of the respiratory chain. F-type ATPases consist of two structural domains, F(1) - containing the extramembraneous catalytic core, and F(0) - containing the membrane proton channel, linked together by a central stalk and a peripheral stalk. During catalysis, ATP synthesis in the catalytic domain of F(1) is coupled via a rotary mechanism of the central stalk subunits to proton translocation. Subunits alpha and beta form the catalytic core in F(1). Rotation of the central stalk against the surrounding alpha(3)beta(3) subunits leads to hydrolysis of ATP in three separate catalytic sites on the beta subunits. Subunit alpha does not bear the catalytic high-affinity ATP-binding sites. This chain is ATP synthase subunit alpha, mitochondrial (ATPA), found in Marchantia polymorpha (Common liverwort).